The sequence spans 157 residues: Protein GrpE (157 aa).

Residues 1–10 (MQEENQHPEQ) are compositionally biased toward basic and acidic residues. The tract at residues 1-21 (MQEENQHPEQDDISEAQDAGA) is disordered.

This sequence belongs to the GrpE family. As to quaternary structure, homodimer.

Its subcellular location is the cytoplasm. Its function is as follows. Participates actively in the response to hyperosmotic and heat shock by preventing the aggregation of stress-denatured proteins, in association with DnaK and GrpE. It is the nucleotide exchange factor for DnaK and may function as a thermosensor. Unfolded proteins bind initially to DnaJ; upon interaction with the DnaJ-bound protein, DnaK hydrolyzes its bound ATP, resulting in the formation of a stable complex. GrpE releases ADP from DnaK; ATP binding to DnaK triggers the release of the substrate protein, thus completing the reaction cycle. Several rounds of ATP-dependent interactions between DnaJ, DnaK and GrpE are required for fully efficient folding. The protein is Protein GrpE of Methylovorus sp. (strain SS1 / DSM 11726).